We begin with the raw amino-acid sequence, 173 residues long: Protein-export protein SecB 1 (173 aa).

The protein belongs to the SecB family. Homotetramer, a dimer of dimers. One homotetramer interacts with 1 SecA dimer.

It localises to the cytoplasm. Functionally, one of the proteins required for the normal export of preproteins out of the cell cytoplasm. It is a molecular chaperone that binds to a subset of precursor proteins, maintaining them in a translocation-competent state. It also specifically binds to its receptor SecA. The protein is Protein-export protein SecB 1 of Gluconobacter oxydans (strain 621H) (Gluconobacter suboxydans).